Consider the following 44-residue polypeptide: MTTRKSAEVITYPIFTVRWVSIHALAVPTIFFLGSITAMQFIQR.

The helical transmembrane segment at 19-35 threads the bilayer; it reads WVSIHALAVPTIFFLGS. His-23 contacts heme.

It belongs to the PsbE/PsbF family. In terms of assembly, heterodimer of an alpha subunit and a beta subunit. PSII is composed of 1 copy each of membrane proteins PsbA, PsbB, PsbC, PsbD, PsbE, PsbF, PsbH, PsbI, PsbJ, PsbK, PsbL, PsbM, PsbT, PsbX, PsbY, PsbZ, Psb30/Ycf12, at least 3 peripheral proteins of the oxygen-evolving complex and a large number of cofactors. It forms dimeric complexes. Heme b serves as cofactor.

It localises to the plastid. The protein localises to the chloroplast thylakoid membrane. Functionally, this b-type cytochrome is tightly associated with the reaction center of photosystem II (PSII). PSII is a light-driven water:plastoquinone oxidoreductase that uses light energy to abstract electrons from H(2)O, generating O(2) and a proton gradient subsequently used for ATP formation. It consists of a core antenna complex that captures photons, and an electron transfer chain that converts photonic excitation into a charge separation. The sequence is that of Cytochrome b559 subunit beta from Chlamydomonas moewusii (Chlamydomonas eugametos).